Reading from the N-terminus, the 548-residue chain is Lysine--tRNA ligase (548 aa).

The short motif at 43–51 (PSGVPHLGN) is the 'HIGH' region element. A 'KMSKS' region motif is present at residues 308–312 (PFSSS).

This sequence belongs to the class-I aminoacyl-tRNA synthetase family.

The protein localises to the cytoplasm. The catalysed reaction is tRNA(Lys) + L-lysine + ATP = L-lysyl-tRNA(Lys) + AMP + diphosphate. This is Lysine--tRNA ligase from Halobacterium salinarum (strain ATCC 700922 / JCM 11081 / NRC-1) (Halobacterium halobium).